Reading from the N-terminus, the 113-residue chain is Replication initiation control protein YabA (113 aa).

The Zn(2+) site is built by H88, C90, C104, and C107.

Belongs to the YabA family. Homotetramer. Interacts with both DnaA and DnaN, acting as a bridge between these two proteins. Zn(2+) serves as cofactor.

It localises to the cytoplasm. The protein resides in the nucleoid. Involved in control of chromosome replication initiation. Inhibits the cooperative binding of DnaA to the oriC region, thus negatively regulating initiation of chromosome replication. Inhibits the ability of DnaA-ATP to form a helix on DNA; does not disassemble preformed DnaA-DNA helices. Decreases the residence time of DnaA on the chromosome at its binding sites (oriC, replication forks and promoter-binding sites). Tethers DnaA to the replication machinery via the DNA polymerase beta sliding clamp subunit (dnaN). Associates with oriC and other DnaA targets on the chromosome in a DnaA-dependent manner. The chain is Replication initiation control protein YabA from Staphylococcus saprophyticus subsp. saprophyticus (strain ATCC 15305 / DSM 20229 / NCIMB 8711 / NCTC 7292 / S-41).